The sequence spans 424 residues: UDP-N-acetylglucosamine 1-carboxyvinyltransferase (424 aa).

A phosphoenolpyruvate-binding site is contributed by 22 to 23; sequence KN. A UDP-N-acetyl-alpha-D-glucosamine-binding site is contributed by Arg93. The active-site Proton donor is Cys117. A 2-(S-cysteinyl)pyruvic acid O-phosphothioketal modification is found at Cys117. UDP-N-acetyl-alpha-D-glucosamine contacts are provided by residues 122–126, Asp307, and Val329; that span reads RPIDL.

This sequence belongs to the EPSP synthase family. MurA subfamily.

Its subcellular location is the cytoplasm. The catalysed reaction is phosphoenolpyruvate + UDP-N-acetyl-alpha-D-glucosamine = UDP-N-acetyl-3-O-(1-carboxyvinyl)-alpha-D-glucosamine + phosphate. It functions in the pathway cell wall biogenesis; peptidoglycan biosynthesis. Its function is as follows. Cell wall formation. Adds enolpyruvyl to UDP-N-acetylglucosamine. The protein is UDP-N-acetylglucosamine 1-carboxyvinyltransferase of Pelodictyon phaeoclathratiforme (strain DSM 5477 / BU-1).